The following is a 55-amino-acid chain: Large ribosomal subunit protein bL33 (55 aa).

Belongs to the bacterial ribosomal protein bL33 family.

In Edwardsiella ictaluri (strain 93-146), this protein is Large ribosomal subunit protein bL33.